The primary structure comprises 257 residues: ADP-dependent (S)-NAD(P)H-hydrate dehydratase (257 aa).

A YjeF C-terminal domain is found at Met1–Arg257. Gly200 provides a ligand contact to AMP. Asp201 lines the (6S)-NADPHX pocket.

The protein belongs to the NnrD/CARKD family. In terms of assembly, homotetramer. It depends on Mg(2+) as a cofactor.

It carries out the reaction (6S)-NADHX + ADP = AMP + phosphate + NADH + H(+). The enzyme catalyses (6S)-NADPHX + ADP = AMP + phosphate + NADPH + H(+). Catalyzes the dehydration of the S-form of NAD(P)HX at the expense of ADP, which is converted to AMP. Together with NAD(P)HX epimerase, which catalyzes the epimerization of the S- and R-forms, the enzyme allows the repair of both epimers of NAD(P)HX, a damaged form of NAD(P)H that is a result of enzymatic or heat-dependent hydration. The sequence is that of ADP-dependent (S)-NAD(P)H-hydrate dehydratase from Haloterrigena turkmenica (strain ATCC 51198 / DSM 5511 / JCM 9101 / NCIMB 13204 / VKM B-1734 / 4k) (Halococcus turkmenicus).